Consider the following 559-residue polypeptide: Potassium-transporting ATPase potassium-binding subunit (559 aa).

12 helical membrane-spanning segments follow: residues 5–25 (GFLL…PLGT), 63–83 (LLAI…LLML), 131–151 (VGLT…VFAL), 173–193 (ITLW…IQQG), 254–274 (VQML…GEVV), 282–302 (AILW…MWAE), 327–347 (FGIL…CGAV), 356–376 (ALGG…FGGV), 379–399 (GLYG…LMVG), 416–436 (MIAL…ALAM), 483–503 (LLLA…VMAI), and 525–545 (ALFI…TFIP).

The protein belongs to the KdpA family. The system is composed of three essential subunits: KdpA, KdpB and KdpC.

The protein resides in the cell inner membrane. In terms of biological role, part of the high-affinity ATP-driven potassium transport (or Kdp) system, which catalyzes the hydrolysis of ATP coupled with the electrogenic transport of potassium into the cytoplasm. This subunit binds the periplasmic potassium ions and delivers the ions to the membrane domain of KdpB through an intramembrane tunnel. The protein is Potassium-transporting ATPase potassium-binding subunit of Klebsiella pneumoniae (strain 342).